The chain runs to 172 residues: Transcriptional repressor NrdR (172 aa).

A zinc finger spans residues 3-34 (CPFCSYSDNRVLESRLAEEGESVRRRRECKQC). Residues 49-139 (TVVIKRNGRR…VYRKFKGVAD (91 aa)) enclose the ATP-cone domain.

Belongs to the NrdR family. Zn(2+) serves as cofactor.

In terms of biological role, negatively regulates transcription of bacterial ribonucleotide reductase nrd genes and operons by binding to NrdR-boxes. This chain is Transcriptional repressor NrdR, found in Gloeobacter violaceus (strain ATCC 29082 / PCC 7421).